The chain runs to 191 residues: Protein GrpE (191 aa).

The segment at 1–49 is disordered; it reads MSEEKQTAEQVEAAEQEEVTEQAEQAASQEQHEETAGQEEALQHQIDEL. The span at 12-21 shows a compositional bias: acidic residues; it reads EAAEQEEVTE. The segment covering 30–49 has biased composition (basic and acidic residues); the sequence is EQHEETAGQEEALQHQIDEL.

The protein belongs to the GrpE family. Homodimer.

It is found in the cytoplasm. Its function is as follows. Participates actively in the response to hyperosmotic and heat shock by preventing the aggregation of stress-denatured proteins, in association with DnaK and GrpE. It is the nucleotide exchange factor for DnaK and may function as a thermosensor. Unfolded proteins bind initially to DnaJ; upon interaction with the DnaJ-bound protein, DnaK hydrolyzes its bound ATP, resulting in the formation of a stable complex. GrpE releases ADP from DnaK; ATP binding to DnaK triggers the release of the substrate protein, thus completing the reaction cycle. Several rounds of ATP-dependent interactions between DnaJ, DnaK and GrpE are required for fully efficient folding. The chain is Protein GrpE from Bacillus velezensis (strain DSM 23117 / BGSC 10A6 / LMG 26770 / FZB42) (Bacillus amyloliquefaciens subsp. plantarum).